The chain runs to 343 residues: Ribosomal RNA small subunit methyltransferase C (343 aa).

This sequence belongs to the methyltransferase superfamily. RsmC family. As to quaternary structure, monomer.

Its subcellular location is the cytoplasm. It catalyses the reaction guanosine(1207) in 16S rRNA + S-adenosyl-L-methionine = N(2)-methylguanosine(1207) in 16S rRNA + S-adenosyl-L-homocysteine + H(+). In terms of biological role, specifically methylates the guanine in position 1207 of 16S rRNA in the 30S particle. The protein is Ribosomal RNA small subunit methyltransferase C of Escherichia fergusonii (strain ATCC 35469 / DSM 13698 / CCUG 18766 / IAM 14443 / JCM 21226 / LMG 7866 / NBRC 102419 / NCTC 12128 / CDC 0568-73).